A 502-amino-acid polypeptide reads, in one-letter code: Arabinose import ATP-binding protein AraG (502 aa).

2 ABC transporter domains span residues L6–R241 and R252–S497. G38–S45 contributes to the ATP binding site.

This sequence belongs to the ABC transporter superfamily. Arabinose importer (TC 3.A.1.2.2) family. As to quaternary structure, the complex is composed of two ATP-binding proteins (AraG), two transmembrane proteins (AraH) and a solute-binding protein (AraF).

Its subcellular location is the cell inner membrane. The enzyme catalyses L-arabinose(out) + ATP + H2O = L-arabinose(in) + ADP + phosphate + H(+). Functionally, part of the ABC transporter complex AraFGH involved in arabinose import. Responsible for energy coupling to the transport system. This is Arabinose import ATP-binding protein AraG from Mannheimia succiniciproducens (strain KCTC 0769BP / MBEL55E).